The chain runs to 313 residues: Solute carrier family 25 member 36 (313 aa).

3 Solcar repeats span residues 4-110 (RDTL…CKEK), 118-205 (DSTQ…IKRK), and 226-310 (SDFV…VVYL). Transmembrane regions (helical) follow at residues 7-27 (LVHL…TCPL), 41-57 (LYIS…ASVN), 113-133 (NIFN…AGFT), 182-202 (MSAS…YESI), 228-248 (FVGM…IAYP), and 293-313 (QIPN…LLDG).

It belongs to the mitochondrial carrier (TC 2.A.29) family.

The protein resides in the mitochondrion inner membrane. Functionally, mitochondrial transporter that imports/exports pyrimidine nucleotides into and from mitochondria. Transports preferentially cytosine and uracil (deoxy)nucleoside mono-, di-, and triphosphates by uniport and antiport mechanism. The protein is Solute carrier family 25 member 36 (SLC25A36) of Gallus gallus (Chicken).